The chain runs to 104 residues: Protein enhancer of rudimentary (104 aa).

Thr-18 bears the Phosphothreonine; by CK2 mark. Residue Ser-24 is modified to Phosphoserine; by CK2.

This sequence belongs to the E(R) family.

In terms of biological role, acts as an enhancer of the rudimentary gene. Has a role in pyrimidine biosynthesis and the cell cycle. The sequence is that of Protein enhancer of rudimentary (e(r)) from Drosophila virilis (Fruit fly).